The chain runs to 149 residues: Large ribosomal subunit protein uL15C (149 aa).

The segment at 21-40 (RIGKHRKQRGGRGNAGGQHH) is disordered.

This sequence belongs to the universal ribosomal protein uL15 family. In terms of assembly, component of the large ribosomal subunit.

Its subcellular location is the cytoplasm. The protein localises to the cytosol. It is found in the endoplasmic reticulum. Its function is as follows. Component of the large ribosomal subunit. The ribosome is a large ribonucleoprotein complex responsible for the synthesis of proteins in the cell. The polypeptide is Large ribosomal subunit protein uL15C (rpl27a-3) (Entamoeba histolytica (strain ATCC 30459 / HM-1:IMSS / ABRM)).